Reading from the N-terminus, the 409-residue chain is N-acetylglucosamine-6-phosphate deacetylase (409 aa).

Glu-143 is an a divalent metal cation binding site. Substrate is bound at residue 154 to 155 (AH). The a divalent metal cation site is built by His-211 and His-232. Substrate contacts are provided by residues 235–236 (NA), Arg-243, and 269–272 (DGTH). Asp-294 functions as the Proton donor/acceptor in the catalytic mechanism. 328-330 (LSG) provides a ligand contact to substrate.

The protein belongs to the metallo-dependent hydrolases superfamily. NagA family. A divalent metal cation is required as a cofactor.

The catalysed reaction is N-acetyl-D-glucosamine 6-phosphate + H2O = D-glucosamine 6-phosphate + acetate. Its pathway is amino-sugar metabolism; N-acetylneuraminate degradation. Functionally, hydrolyzes the N-glycolyl group from N-glycolylglucosamine 6-phosphate (GlcNGc-6-P) in the N-glycolylneuraminic acid (Neu5Gc) degradation pathway. Although human is not able to catalyze formation of Neu5Gc due to the inactive CMAHP enzyme, Neu5Gc is present in food and must be degraded. The chain is N-acetylglucosamine-6-phosphate deacetylase (AMDHD2) from Homo sapiens (Human).